The sequence spans 277 residues: Formamidopyrimidine-DNA glycosylase (277 aa).

Proline 2 serves as the catalytic Schiff-base intermediate with DNA. The active-site Proton donor is the glutamate 3. Lysine 59 serves as the catalytic Proton donor; for beta-elimination activity. DNA contacts are provided by histidine 96, arginine 115, and arginine 158. The FPG-type zinc-finger motif lies at 243–277 (WVYGRGGNPCRRCGGEILREKRAGRSTHFCPRCQK). Arginine 267 functions as the Proton donor; for delta-elimination activity in the catalytic mechanism.

This sequence belongs to the FPG family. Monomer. The cofactor is Zn(2+).

It catalyses the reaction Hydrolysis of DNA containing ring-opened 7-methylguanine residues, releasing 2,6-diamino-4-hydroxy-5-(N-methyl)formamidopyrimidine.. The catalysed reaction is 2'-deoxyribonucleotide-(2'-deoxyribose 5'-phosphate)-2'-deoxyribonucleotide-DNA = a 3'-end 2'-deoxyribonucleotide-(2,3-dehydro-2,3-deoxyribose 5'-phosphate)-DNA + a 5'-end 5'-phospho-2'-deoxyribonucleoside-DNA + H(+). In terms of biological role, involved in base excision repair of DNA damaged by oxidation or by mutagenic agents. Acts as a DNA glycosylase that recognizes and removes damaged bases. Has a preference for oxidized purines, such as 7,8-dihydro-8-oxoguanine (8-oxoG). Has AP (apurinic/apyrimidinic) lyase activity and introduces nicks in the DNA strand. Cleaves the DNA backbone by beta-delta elimination to generate a single-strand break at the site of the removed base with both 3'- and 5'-phosphates. This chain is Formamidopyrimidine-DNA glycosylase, found in Heliobacterium modesticaldum (strain ATCC 51547 / Ice1).